We begin with the raw amino-acid sequence, 138 residues long: NADH dehydrogenase [ubiquinone] iron-sulfur protein 2, mitochondrial (138 aa).

The protein belongs to the complex I 49 kDa subunit family. In terms of assembly, core subunit of respiratory chain NADH dehydrogenase (Complex I) which is composed of 45 different subunits. Component of the iron-sulfur (IP) fragment of the enzyme. Interacts with NDUFAF3. Interacts with NDUFAF7. Interacts with CERS2. [4Fe-4S] cluster is required as a cofactor. In terms of processing, dimethylation at Arg-118 by NDUFAF7 takes place after NDUFS2 assembles into the complex I, leading to stabilize the early intermediate complex.

The protein resides in the mitochondrion inner membrane. The catalysed reaction is a ubiquinone + NADH + 5 H(+)(in) = a ubiquinol + NAD(+) + 4 H(+)(out). Its function is as follows. Core subunit of the mitochondrial membrane respiratory chain NADH dehydrogenase (Complex I) which catalyzes electron transfer from NADH through the respiratory chain, using ubiquinone as an electron acceptor. Essential for the catalytic activity and assembly of complex I. Redox-sensitive, critical component of the oxygen-sensing pathway in the pulmonary vasculature which plays a key role in acute pulmonary oxygen-sensing and hypoxic pulmonary vasoconstriction. Plays an important role in carotid body sensing of hypoxia. Essential for glia-like neural stem and progenitor cell proliferation, differentiation and subsequent oligodendrocyte or neuronal maturation. In Mesocricetus auratus (Golden hamster), this protein is NADH dehydrogenase [ubiquinone] iron-sulfur protein 2, mitochondrial.